The primary structure comprises 217 residues: Methylthioribulose-1-phosphate dehydratase (217 aa).

Zn(2+) is bound by residues His-106 and His-108.

Belongs to the aldolase class II family. MtnB subfamily. It depends on Zn(2+) as a cofactor.

The catalysed reaction is 5-(methylsulfanyl)-D-ribulose 1-phosphate = 5-methylsulfanyl-2,3-dioxopentyl phosphate + H2O. It functions in the pathway amino-acid biosynthesis; L-methionine biosynthesis via salvage pathway; L-methionine from S-methyl-5-thio-alpha-D-ribose 1-phosphate: step 2/6. Its function is as follows. Catalyzes the dehydration of methylthioribulose-1-phosphate (MTRu-1-P) into 2,3-diketo-5-methylthiopentyl-1-phosphate (DK-MTP-1-P). This Xanthomonas euvesicatoria pv. vesicatoria (strain 85-10) (Xanthomonas campestris pv. vesicatoria) protein is Methylthioribulose-1-phosphate dehydratase.